The chain runs to 214 residues: Holliday junction branch migration complex subunit RuvA (214 aa).

The tract at residues 1–63 (MISSLRGTVL…EDSLTLFGFP (63 aa)) is domain I. The interval 64 to 139 (GPDELRAFEL…KLFVTQPRAR (76 aa)) is domain II. The interval 139–143 (RSATS) is flexible linker. The segment at 144 to 214 (AASTVTADVV…AAPTGQAADR (71 aa)) is domain III.

The protein belongs to the RuvA family. In terms of assembly, homotetramer. Forms an RuvA(8)-RuvB(12)-Holliday junction (HJ) complex. HJ DNA is sandwiched between 2 RuvA tetramers; dsDNA enters through RuvA and exits via RuvB. An RuvB hexamer assembles on each DNA strand where it exits the tetramer. Each RuvB hexamer is contacted by two RuvA subunits (via domain III) on 2 adjacent RuvB subunits; this complex drives branch migration. In the full resolvosome a probable DNA-RuvA(4)-RuvB(12)-RuvC(2) complex forms which resolves the HJ.

It localises to the cytoplasm. In terms of biological role, the RuvA-RuvB-RuvC complex processes Holliday junction (HJ) DNA during genetic recombination and DNA repair, while the RuvA-RuvB complex plays an important role in the rescue of blocked DNA replication forks via replication fork reversal (RFR). RuvA specifically binds to HJ cruciform DNA, conferring on it an open structure. The RuvB hexamer acts as an ATP-dependent pump, pulling dsDNA into and through the RuvAB complex. HJ branch migration allows RuvC to scan DNA until it finds its consensus sequence, where it cleaves and resolves the cruciform DNA. The protein is Holliday junction branch migration complex subunit RuvA of Clavibacter michiganensis subsp. michiganensis (strain NCPPB 382).